A 380-amino-acid polypeptide reads, in one-letter code: Succinyl-diaminopimelate desuccinylase (380 aa).

His71 serves as a coordination point for Zn(2+). The active site involves Asp73. Residue Asp104 coordinates Zn(2+). Glu138 acts as the Proton acceptor in catalysis. The Zn(2+) site is built by Glu139, Glu167, and His353.

It belongs to the peptidase M20A family. DapE subfamily. As to quaternary structure, homodimer. Requires Zn(2+) as cofactor. It depends on Co(2+) as a cofactor.

The catalysed reaction is N-succinyl-(2S,6S)-2,6-diaminopimelate + H2O = (2S,6S)-2,6-diaminopimelate + succinate. It functions in the pathway amino-acid biosynthesis; L-lysine biosynthesis via DAP pathway; LL-2,6-diaminopimelate from (S)-tetrahydrodipicolinate (succinylase route): step 3/3. In terms of biological role, catalyzes the hydrolysis of N-succinyl-L,L-diaminopimelic acid (SDAP), forming succinate and LL-2,6-diaminopimelate (DAP), an intermediate involved in the bacterial biosynthesis of lysine and meso-diaminopimelic acid, an essential component of bacterial cell walls. This Shewanella baltica (strain OS185) protein is Succinyl-diaminopimelate desuccinylase.